A 492-amino-acid polypeptide reads, in one-letter code: MDPPNSLQQGIRFGFHSSSFVENMEGSQDEDNLRLLASAASGSSRDTETPTDHASGSAGGAAGGQSESRPGPSGGGVADLFPELRRVLTRSTTSGQNRGIKRERNPSGNNSRTELALSLMSRRRPETVWWHEVQSEGRDEVSILQEKYSLEQLKTCWLEPEDDWEVAIRNYAKISLRPDKQYRITKKINIRNACYISGNGAEVIIDTQDKAAFRCCMMGMWPGVVGMEAITLMNIRFRGDGYNGIVFMANTKLILHGCSFFGFNNTCVEAWGQVSVRGCSFYACWIATSGRVKSQLSVKKCMFERCNLGILNEGEARVRHCAATETACFILIKGNASVKHNMICGHSDERPYQMLTCAGGHCNILATVHIVSHARKKWPVFEHNVITKCTMHIGGRRGMFMPYQCNMNHVKVMLEPDAFSRVSVTGIFDMNIQLWKILRYDDTKPRVRACECGGKHARFQPVCVDVTEDLRPDHLVLACTGAEFGSSGEETD.

Residues 22–112 (ENMEGSQDED…ERNPSGNNSR (91 aa)) form a disordered region. Over residues 34-44 (RLLASAASGSS) the composition is skewed to low complexity. Phosphoserine occurs at positions 486 and 487. Thr491 carries the post-translational modification Phosphothreonine.

It belongs to the adenoviridae E1B 55 kDa protein family. In terms of assembly, interacts with host PML-4 and PML-5; this interaction promotes efficient subnuclear targeting of E1B-55K to PML nuclear bodies. Interacts with E4-ORF3 protein. Interacts with E4-ORF6 protein.

It localises to the host nucleus. The protein localises to the host cytoplasm. Plays a major role to prevent cellular inhibition of viral genome replication. Assembles an SCF-like E3 ubiquitin ligase complex based on the cellular proteins ELOB, ELOC, CUL5 and RBX1, in cooperation with viral E4orf6. This viral RING-type ligase ubiquitinates cellular substrates and targets them to proteasomal degradation: TP53/p53, LIG4, MRE11-RAD50-NBS1 (MRN) complex, ITGA3, DAXX and BLM. E1B-55K probably acts as the substrate-specific adapter of the SCF-like E3 ubiquitin ligase complex. Degradation of host TP53/p53 activity is essential for preventing E1A-induced TP53 accumulation that would otherwise lead to cell apoptosis and growth arrest. E1B-55K also inactivates TP53 transcription-factor activity by binding its transactivation domain. E1B-55K also functions as a SUMO1 E3 ligase for TP53 which causes the latter to be sequestered in promyelocytic leukemia (PML) nuclear bodies thereby contributing to maximal inhibition of TP53 function. The sequence is that of E1B 55 kDa protein from Human adenovirus B serotype 7 (HAdV-7).